Reading from the N-terminus, the 668-residue chain is Glucan endo-1,3-beta-D-glucosidase (668 aa).

Residues 2–208 (VNIQTNTSYI…SGIIRIALLP (207 aa)) form a beta-sandwich subdomain region. The GH81 domain occupies 2-668 (VNIQTNTSYI…LWWIHSRSDE (667 aa)). 4 N-linked (GlcNAc...) asparagine glycosylation sites follow: Asn-65, Asn-124, Asn-160, and Asn-187. The alpha/beta subdomain stretch occupies residues 209 to 299 (DSDSKHEAVL…GDSWVLKTDP (91 aa)). Residues 240–443 (EYNWEKKDSG…TKLDPAWGRK (204 aa)) are involved in beta-glucan binding. The segment at 309-668 (GIKEESHDEI…LWWIHSRSDE (360 aa)) is (alpha/beta)6 barrel subdomain. The active site involves Asp-418. His-422 contacts (1,3-beta-D-glucosyl)n. N-linked (GlcNAc...) asparagine glycosylation occurs at Asn-465. Catalysis depends on residues Glu-494 and Glu-498. (1,3-beta-D-glucosyl)n is bound by residues Glu-494 and Glu-498. The tract at residues 564–566 (KRD) is may provide specificity for triple-helical beta-glucan.

It belongs to the glycosyl hydrolase 81 family. In terms of tissue distribution, expressed in roots (at protein level). Expressed in leaves.

It localises to the secreted. It is found in the cell wall. The catalysed reaction is Hydrolysis of (1-&gt;3)-beta-D-glucosidic linkages in (1-&gt;3)-beta-D-glucans.. In terms of biological role, cleaves internal linkages in 1,3-beta-glucan. Beta-glucan, a polysaccharide constituent of fungal cell walls, can act as an elicitor in the plant, triggering defense responses including phytoalexin synthesis. The protein is Glucan endo-1,3-beta-D-glucosidase of Glycine max (Soybean).